Here is a 228-residue protein sequence, read N- to C-terminus: Type II methyltransferase M.HhaII (228 aa).

This sequence belongs to the N(4)/N(6)-methyltransferase family.

It catalyses the reaction a 2'-deoxyadenosine in DNA + S-adenosyl-L-methionine = an N(6)-methyl-2'-deoxyadenosine in DNA + S-adenosyl-L-homocysteine + H(+). In terms of biological role, a beta subtype methylase, recognizes the double-stranded sequence 5'-GANTC-3', methylates A-2 on both strands, and protects the DNA from cleavage by the HhaII endonuclease. This is Type II methyltransferase M.HhaII from Haemophilus parahaemolyticus.